The chain runs to 88 residues: MRLILSLPVLVVVLSMVLEGPAPAQAAGEISSTFERIPDKLKEFGNTLEDKARAAIESIKKSDIPAKTRNWFSEAFKKVKEHLKTAFS.

The first 26 residues, 1-26 (MRLILSLPVLVVVLSMVLEGPAPAQA), serve as a signal peptide directing secretion.

The protein belongs to the apolipoprotein C1 family. Expressed in the liver.

Its subcellular location is the secreted. In terms of biological role, inhibitor of lipoprotein binding to the low density lipoprotein (LDL) receptor, LDL receptor-related protein, and very low density lipoprotein (VLDL) receptor. Associates with high density lipoproteins (HDL) and the triacylglycerol-rich lipoproteins in the plasma and makes up about 10% of the protein of the VLDL and 2% of that of HDL. Appears to interfere directly with fatty acid uptake and is also the major plasma inhibitor of cholesteryl ester transfer protein (CETP). Binds free fatty acids and reduces their intracellular esterification. Modulates the interaction of APOE with beta-migrating VLDL and inhibits binding of beta-VLDL to the LDL receptor-related protein. The chain is Apolipoprotein C-I (APOC1) from Canis lupus familiaris (Dog).